The chain runs to 704 residues: DNA-directed DNA polymerase (704 aa).

A 3'-5'exonuclease region spans residues 1–187; sequence MIVSDIEANA…TKALLEKLLS (187 aa). The Mg(2+) site is built by Asp-5, Glu-7, and Asp-174. A polymerase region spans residues 202 to 704; sequence GYTTFWSESL…KMGPNWAICH (503 aa). The interval 262–338 is binding to host TrxA; sequence GSWYQPKGGT…VEHVVFNPSS (77 aa). Mg(2+) is bound by residues Asp-475 and Ala-476. Substrate is bound by residues His-506, Arg-518, Lys-522, and Tyr-526. Asp-654 provides a ligand contact to Mg(2+).

This sequence belongs to the DNA polymerase type-A family. In terms of assembly, composed of two subunits. One is encoded by the phage and the other is encoded by the host thioredoxin. Interacts with DNA primase/helicase; this interaction is essential for the coordination of DNA unwinding and nucleotide polymerization on duplex DNA. Interacts with the ssDNA-binding protein. Part of the replicase complex that includes the DNA polymerase, thioredoxin, the primase/helicase and the single-stranded DNA binding protein. Mg(2+) serves as cofactor.

The enzyme catalyses DNA(n) + a 2'-deoxyribonucleoside 5'-triphosphate = DNA(n+1) + diphosphate. Functionally, replicates viral genomic DNA. This polymerase possesses two enzymatic activities: DNA synthesis (polymerase) and an exonucleolytic activity that degrades single-stranded DNA in the 3'-5' direction. Non-processive DNA polymerase that achieves processivity by binding to host thioredoxin (TrxA). This interaction increases the rate of dNTP incorporation to yield a processivity of approximately 800 nucleotides (nt) per binding event. Interacts with DNA helicase gp4 to coordinate nucleotide polymerization with unwinding of the DNA. The leading strand is synthesized continuously while synthesis of the lagging strand requires the synthesis of oligoribonucleotides by the primase domain of gp4. This is DNA-directed DNA polymerase from Escherichia phage T7 (Bacteriophage T7).